A 499-amino-acid chain; its full sequence is Alpha-internexin (499 aa).

The head stretch occupies residues 1-87; sequence MSFGSEHYLC…SQAAARTNEY (87 aa). Position 72 is a phosphoserine (Ser-72). The segment at 88–129 is coil 1A; that stretch reads KIIRTNEKEQLQGLNDRFAVFIEKVHQLETQNRALEAELAAL. The 314-residue stretch at 94–407 folds into the IF rod domain; sequence EKEQLQGLND…KLLEGEETRF (314 aa). Residues 130 to 142 form a linker 1 region; that stretch reads RQRHAEPSRVGEL. A coil 1B region spans residues 143–238; sequence FQRELRDLRA…QVHDEEVAEL (96 aa). Ser-219 is subject to Phosphoserine. The tract at residues 239–262 is linker 2; that stretch reads LATLQASSQAAAEVDVTVAKPDLT. Residues 263 to 408 are coil 2; that stretch reads SALREIRAQY…LLEGEETRFS (146 aa). An N6-acetyllysine modification is found at Lys-290. Phosphoserine is present on Ser-335. The segment at 409-499 is tail; the sequence is TSGLSISGLN…EETTISSQKI (91 aa). The interval 441–466 is disordered; it reads STGLSLKKEEEEEEASKVASKKTSQI. Phosphoserine occurs at positions 469 and 496.

This sequence belongs to the intermediate filament family. Forms homodimers (in vitro). Forms heterodimers with NEFL, NEFM or NEFH (in vitro). Post-translationally, O-glycosylated. As to expression, found predominantly in adult CNS.

Its function is as follows. Class-IV neuronal intermediate filament that is able to self-assemble. It is involved in the morphogenesis of neurons. It may form an independent structural network without the involvement of other neurofilaments or it may cooperate with NEFL to form the filamentous backbone to which NEFM and NEFH attach to form the cross-bridges. May also cooperate with the neuronal intermediate filament protein PRPH to form filamentous networks. The sequence is that of Alpha-internexin (INA) from Homo sapiens (Human).